The primary structure comprises 140 residues: Profilin-1 (140 aa).

The residue at position 2 (alanine 2) is an N-acetylalanine. Residue serine 28 is modified to Phosphoserine. A Glycyl lysine isopeptide (Lys-Gly) (interchain with G-Cter in SUMO2); alternate cross-link involves residue lysine 54. A Glycyl lysine isopeptide (Lys-Gly) (interchain with G-Cter in ubiquitin); alternate cross-link involves residue lysine 54. Serine 57 bears the Phosphoserine mark. Lysine 108 carries the N6-acetyllysine modification. Tyrosine 129 is modified (phosphotyrosine). Phosphoserine; by ROCK1 is present on serine 138.

The protein belongs to the profilin family. In terms of assembly, found in a complex with XPO6, Ran, ACTB and PFN1. Interacts with ACTB. Interacts with VASP. Interacts with HTT. Interacts with SH3BGRL. Occurs in many kinds of cells as a complex with monomeric actin in a 1:1 ratio. Interacts with ACTMAP. Phosphorylation at Ser-138 reduces its affinity for G-actin and blocks its interaction with HTT, reducing its ability to inhibit androgen receptor (AR) and HTT aggregation.

The protein resides in the cytoplasm. Its subcellular location is the cytoskeleton. Binds to actin and affects the structure of the cytoskeleton. At high concentrations, profilin prevents the polymerization of actin, whereas it enhances it at low concentrations. By binding to PIP2, it inhibits the formation of IP3 and DG. Inhibits androgen receptor (AR) and HTT aggregation and binding of G-actin is essential for its inhibition of AR. This Bos taurus (Bovine) protein is Profilin-1 (PFN1).